The sequence spans 123 residues: Large ribosomal subunit protein uL14 (123 aa).

This sequence belongs to the universal ribosomal protein uL14 family. In terms of assembly, part of the 50S ribosomal subunit. Forms a cluster with proteins L3 and L19. In the 70S ribosome, L14 and L19 interact and together make contacts with the 16S rRNA in bridges B5 and B8.

Binds to 23S rRNA. Forms part of two intersubunit bridges in the 70S ribosome. The protein is Large ribosomal subunit protein uL14 of Corynebacterium jeikeium (strain K411).